The primary structure comprises 592 residues: Calnexin (592 aa).

An N-terminal signal peptide occupies residues 1 to 20 (MEGKWLLCMLLVLGTAIVEA). Topologically, residues 21-481 (HDGHDDDVID…QMIEAAEERP (461 aa)) are lumenal. Ca(2+) is bound by residues Ser74 and Asp117. N6-acetyllysine is present on Lys137. An intrachain disulfide couples Cys160 to Cys194. The an alpha-D-glucoside site is built by Tyr164, Lys166, Tyr185, and Asp192. The tract at residues 260 to 345 (GNLLNDMTPP…AEKPEDWDED (86 aa)) is disordered. Residues 274–319 (REIEDPEDRKPEDWDERPKIPDPEAVKPDDWDEDAPAKIPDEEATK) show a composition bias toward basic and acidic residues. The p domain (Extended arm) stretch occupies residues 276 to 409 (IEDPEDRKPE…RKIPNPDFFE (134 aa)). 5 consecutive repeat copies span residues 278-290 (DPED…WDER), 295-307 (DPEA…WDED), 314-326 (DEEA…WLDD), 333-345 (DPDA…WDED), and 348-358 (GEWEAPQIANP). 4 X approximate repeats regions lie at residues 278 to 345 (DPED…WDED) and 348 to 405 (GEWE…IPNP). Residues 323–345 (WLDDEPEYVPDPDAEKPEDWDED) are compositionally biased toward acidic residues. The interval 326–359 (DEPEYVPDPDAEKPEDWDEDMDGEWEAPQIANPK) is interaction with PPIB. Cys360 and Cys366 are joined by a disulfide. Tandem repeats lie at residues 367–377 (GVWQRPMIDNP), 381–391 (GKWKPPMIDNP), and 395–405 (GIWKPRKIPNP). Glu425 contributes to the an alpha-D-glucoside binding site. A Ca(2+)-binding site is contributed by Asp436. The helical transmembrane segment at 482 to 502 (WLWVVYILTVALPVFLVILFC) threads the bilayer. 2 S-palmitoyl cysteine lipidation sites follow: Cys502 and Cys503. Over 503-592 (CSGKKQTSAM…SPRNRKPRRE (90 aa)) the chain is Cytoplasmic. Residues 503-592 (CSGKKQTSAM…SPRNRKPRRE (90 aa)) form a sufficient to mediate interaction with SGIP1 region. The tract at residues 511-592 (AMEYKKTDAP…SPRNRKPRRE (82 aa)) is disordered. Over residues 525-547 (KEEEEEKEEEKDKGDEEEEGEEK) the composition is skewed to acidic residues. Residue Ser554 is modified to Phosphoserine. Residue Thr562 is modified to Phosphothreonine. Ser564 carries the post-translational modification Phosphoserine; by MAPK3. Residue Ser583 is modified to Phosphoserine.

It belongs to the calreticulin family. In terms of assembly, interacts with MAPK3/ERK1. Interacts with KCNH2. Associates with ribosomes. Interacts with SGIP1; involved in negative regulation of endocytosis. The palmitoylated form interacts with the ribosome-translocon complex component SSR1, promoting efficient folding of glycoproteins. Interacts with SERPINA2P/SERPINA2 and with the S and Z variants of SERPINA1. Interacts with PPIB. Interacts with ZNRF4. Interacts with SMIM22. Interacts with TMX2. Interacts with TMEM35A/NACHO and CHRNA7. Interacts with reticulophagy regulators RETREG2 and RETREG3. Interacts with DNM1L; may form part of a larger protein complex at the ER-mitochondrial interface during mitochondrial fission. Interacts with ADAM7. Post-translationally, phosphorylated at Ser-564 by MAPK3/ERK1. Phosphorylation by MAPK3/ERK1 increases its association with ribosomes. Palmitoylation by DHHC6 leads to the preferential localization to the perinuclear rough ER. It mediates the association of calnexin with the ribosome-translocon complex (RTC) which is required for efficient folding of glycosylated proteins. In terms of processing, ubiquitinated, leading to proteasomal degradation. Probably ubiquitinated by ZNRF4.

It is found in the endoplasmic reticulum membrane. Its subcellular location is the mitochondrion membrane. The protein localises to the melanosome membrane. Calcium-binding protein that interacts with newly synthesized monoglucosylated glycoproteins in the endoplasmic reticulum. It may act in assisting protein assembly and/or in the retention within the ER of unassembled protein subunits. It seems to play a major role in the quality control apparatus of the ER by the retention of incorrectly folded proteins. Associated with partial T-cell antigen receptor complexes that escape the ER of immature thymocytes, it may function as a signaling complex regulating thymocyte maturation. Additionally it may play a role in receptor-mediated endocytosis at the synapse. In Pongo abelii (Sumatran orangutan), this protein is Calnexin (CANX).